The chain runs to 106 residues: uncharacterized protein (106 aa).

A run of 2 helical transmembrane segments spans residues 25-45 (VMNV…IHYI) and 62-82 (ICFL…NFQG).

Its subcellular location is the membrane. This is an uncharacterized protein from Saccharomyces cerevisiae (strain ATCC 204508 / S288c) (Baker's yeast).